The following is a 288-amino-acid chain: Cyclin-dependent kinase 2 homolog (288 aa).

A Protein kinase domain is found at 4–284; that stretch reads YHGLEKIGEG…AKEALQHAYF (281 aa). ATP-binding positions include 10–18 and lysine 32; that span reads IGEGTYGVV. Phosphothreonine is present on threonine 14. Tyrosine 15 is subject to Phosphotyrosine. Catalysis depends on aspartate 125, which acts as the Proton acceptor. The residue at position 158 (threonine 158) is a Phosphothreonine.

This sequence belongs to the protein kinase superfamily. CMGC Ser/Thr protein kinase family. CDC2/CDKX subfamily. May form a complex composed of at least the catalytic subunit CRK2 and a cyclin. Mg(2+) serves as cofactor.

Its subcellular location is the cytoplasm. The enzyme catalyses L-seryl-[protein] + ATP = O-phospho-L-seryl-[protein] + ADP + H(+). It carries out the reaction L-threonyl-[protein] + ATP = O-phospho-L-threonyl-[protein] + ADP + H(+). The catalysed reaction is [DNA-directed RNA polymerase] + ATP = phospho-[DNA-directed RNA polymerase] + ADP + H(+). With respect to regulation, phosphorylation at Thr-14 or Tyr-15 inactivates the enzyme, while phosphorylation at Thr-158 activates it. Serine/threonine-protein kinase. Involved in the control of the cell cycle. Required for entry into S-phase and mitosis. Probable component of the kinase complex that phosphorylates the repetitive C-terminus of RNA polymerase II. This is Cyclin-dependent kinase 2 homolog from Plasmodium knowlesi (strain H).